Here is a 224-residue protein sequence, read N- to C-terminus: Cysteine S-methyltransferase NleE (224 aa).

The interaction with host proteins TAB2, TAB3 and ZRANB3 stretch occupies residues 49–52 (GITR). S-adenosyl-L-methionine is bound by residues alanine 92, serine 98, arginine 107, glutamine 111, tyrosine 204, and glutamate 208.

This sequence belongs to the NleE/OspZ family. In terms of assembly, monomer.

Its subcellular location is the secreted. It localises to the host nucleus. It catalyses the reaction L-cysteinyl-[protein] + S-adenosyl-L-methionine = S-methyl-L-cysteinyl-[protein] + S-adenosyl-L-homocysteine + H(+). Functionally, cysteine methyltransferase effector that inhibits host cell NF-kappa-B activation by preventing nuclear translocation of host protein RELA/p65. Acts by mediating cysteine methylation of host proteins TAB2 and TAB3: methylation of a conserved cysteine residue of the RanBP2-type zinc finger (NZF) of TAB2 and TAB3 disrupts zinc-binding, thereby inactivating the ubiquitin chain-binding activity of TAB2 and TAB3, leading to NF-kappa-B inactivation. Also mediates cysteine methylation of host protein ZRANB3, inactivating its ability to bind ubiquitin chains. In Escherichia coli O157:H7, this protein is Cysteine S-methyltransferase NleE.